A 193-amino-acid chain; its full sequence is Acyl carrier protein phosphodiesterase (193 aa).

The protein belongs to the AcpH family.

It catalyses the reaction holo-[ACP] + H2O = apo-[ACP] + (R)-4'-phosphopantetheine + H(+). Converts holo-ACP to apo-ACP by hydrolytic cleavage of the phosphopantetheine prosthetic group from ACP. In Yersinia enterocolitica serotype O:8 / biotype 1B (strain NCTC 13174 / 8081), this protein is Acyl carrier protein phosphodiesterase.